We begin with the raw amino-acid sequence, 171 residues long: 3-hydroxydecanoyl-[acyl-carrier-protein] dehydratase (171 aa).

Residue His70 is part of the active site.

Belongs to the thioester dehydratase family. FabA subfamily. As to quaternary structure, homodimer.

The protein localises to the cytoplasm. It catalyses the reaction a (3R)-hydroxyacyl-[ACP] = a (2E)-enoyl-[ACP] + H2O. The enzyme catalyses (3R)-hydroxydecanoyl-[ACP] = (2E)-decenoyl-[ACP] + H2O. It carries out the reaction (2E)-decenoyl-[ACP] = (3Z)-decenoyl-[ACP]. It functions in the pathway lipid metabolism; fatty acid biosynthesis. Its function is as follows. Necessary for the introduction of cis unsaturation into fatty acids. Catalyzes the dehydration of (3R)-3-hydroxydecanoyl-ACP to E-(2)-decenoyl-ACP and then its isomerization to Z-(3)-decenoyl-ACP. Can catalyze the dehydratase reaction for beta-hydroxyacyl-ACPs with saturated chain lengths up to 16:0, being most active on intermediate chain length. The protein is 3-hydroxydecanoyl-[acyl-carrier-protein] dehydratase of Shewanella frigidimarina (strain NCIMB 400).